Here is a 311-residue protein sequence, read N- to C-terminus: Transcription initiation factor IIB (311 aa).

The TFIIB-type zinc-finger motif lies at 11-42 (KETKCPECGSTKLINDHERGEVVCGACGLVID). Zn(2+)-binding residues include Cys15, Cys18, Cys34, and Cys37. 2 repeat units span residues 128-211 (SELD…TREL) and 222-303 (DYVP…ELTE).

The protein belongs to the TFIIB family.

Its function is as follows. Stabilizes TBP binding to an archaeal box-A promoter. Also responsible for recruiting RNA polymerase II to the pre-initiation complex (DNA-TBP-TFIIB). This Methanosphaera stadtmanae (strain ATCC 43021 / DSM 3091 / JCM 11832 / MCB-3) protein is Transcription initiation factor IIB.